Reading from the N-terminus, the 108-residue chain is PTS system fructose-like EIIB component 1 (108 aa).

One can recognise a PTS EIIB type-2 domain in the interval 1-101; it reads MSKKLIALCA…AAGIIKEIEE (101 aa). The active-site Phosphocysteine intermediate is cysteine 11. Cysteine 11 bears the Phosphocysteine; by EIIA mark.

It localises to the cytoplasm. It catalyses the reaction D-fructose(out) + N(pros)-phospho-L-histidyl-[protein] = D-fructose 1-phosphate(in) + L-histidyl-[protein]. Functionally, the phosphoenolpyruvate-dependent sugar phosphotransferase system (sugar PTS), a major carbohydrate active transport system, catalyzes the phosphorylation of incoming sugar substrates concomitantly with their translocation across the cell membrane. The enzyme II FryABC PTS system is involved in fructose transport. The chain is PTS system fructose-like EIIB component 1 (fryB) from Shigella flexneri.